A 217-amino-acid polypeptide reads, in one-letter code: Small ribosomal subunit protein uS3c (217 aa).

A KH type-2 domain is found at 47–119 (VRTHIKSSSN…KLHIAIEKVA (73 aa)).

This sequence belongs to the universal ribosomal protein uS3 family. As to quaternary structure, part of the 30S ribosomal subunit.

Its subcellular location is the plastid. The protein resides in the chloroplast. The sequence is that of Small ribosomal subunit protein uS3c (rps3) from Pinus koraiensis (Korean pine).